The primary structure comprises 273 residues: 5-deoxy-glucuronate isomerase (273 aa).

Belongs to the isomerase IolB family.

It carries out the reaction 5-deoxy-D-glucuronate = 5-dehydro-2-deoxy-D-gluconate. It participates in polyol metabolism; myo-inositol degradation into acetyl-CoA; acetyl-CoA from myo-inositol: step 4/7. Functionally, involved in the isomerization of 5-deoxy-glucuronate (5DG) to 5-dehydro-2-deoxy-D-gluconate (DKG or 2-deoxy-5-keto-D-gluconate). This is 5-deoxy-glucuronate isomerase from Listeria monocytogenes serovar 1/2a (strain ATCC BAA-679 / EGD-e).